The following is a 123-amino-acid chain: Thioredoxin H-type (123 aa).

In terms of domain architecture, Thioredoxin spans 2–119 (AATAELIPAG…IEAKLLKHSQ (118 aa)). A disulfide bond links cysteine 45 and cysteine 48.

This sequence belongs to the thioredoxin family. Plant H-type subfamily.

The protein resides in the cytoplasm. Participates in various redox reactions through the reversible oxidation of the active center dithiol to a disulfide. The H form is known to activate a number of cytosolic enzymes. In Brassica campestris (Field mustard), this protein is Thioredoxin H-type (PEC-2).